Here is a 154-residue protein sequence, read N- to C-terminus: MTSILVLNGPNLNLLGTREPAVYGHETLADVERLCREEGERLGHAVACRQSNHEGQLIDWIHEAGRACVRGELLGIVLNAGALTHTSLALHDAIKGASVPVIEYHISNVHAREPFRHHSWIAPAARAVMAGLGVAGYALALRALVLVAPPRQAA.

Y23 acts as the Proton acceptor in catalysis. Substrate-binding residues include N79, H85, and D92. The active-site Proton donor is the H105. Substrate-binding positions include I106–S107 and R116.

Belongs to the type-II 3-dehydroquinase family. As to quaternary structure, homododecamer.

The enzyme catalyses 3-dehydroquinate = 3-dehydroshikimate + H2O. It participates in metabolic intermediate biosynthesis; chorismate biosynthesis; chorismate from D-erythrose 4-phosphate and phosphoenolpyruvate: step 3/7. In terms of biological role, catalyzes a trans-dehydration via an enolate intermediate. The chain is 3-dehydroquinate dehydratase 2 (aroQ2) from Ralstonia nicotianae (strain ATCC BAA-1114 / GMI1000) (Ralstonia solanacearum).